The sequence spans 107 residues: Homeobox protein HD-3 (107 aa).

The homeobox DNA-binding region spans S6 to A65.

The protein localises to the nucleus. The chain is Homeobox protein HD-3 (HD-3) from Encephalitozoon cuniculi (strain GB-M1) (Microsporidian parasite).